A 171-amino-acid polypeptide reads, in one-letter code: Ribosome maturation factor RimM (171 aa).

The region spanning 97 to 170 is the PRC barrel domain; sequence KLNYFSWDHY…IIYMKLPVGL (74 aa).

This sequence belongs to the RimM family. Binds ribosomal protein uS19.

It localises to the cytoplasm. In terms of biological role, an accessory protein needed during the final step in the assembly of 30S ribosomal subunit, possibly for assembly of the head region. Essential for efficient processing of 16S rRNA. May be needed both before and after RbfA during the maturation of 16S rRNA. It has affinity for free ribosomal 30S subunits but not for 70S ribosomes. The sequence is that of Ribosome maturation factor RimM from Azobacteroides pseudotrichonymphae genomovar. CFP2.